The following is a 347-amino-acid chain: Merozoite surface protein 2 (347 aa).

Positions 1 to 20 (MKVIKTLSIINFFIFVTFNI) are cleaved as a signal peptide. N-linked (GlcNAc...) asparagine glycosylation is found at Asn22 and Asn36. The tract at residues 44-273 (AESKPPTGDG…EQTESPELQS (230 aa)) is polymorphic region. 22 repeat units span residues 53-60 (GAVASAGN), 61-68 (GAVASAGN), 69-76 (GAVASAGN), 77-84 (GAVASAGN), 85-88 (GAGN), 89-92 (GAGN), 93-96 (GAGN), 97-100 (GAGN), 101-104 (GAGN), 105-108 (GAGN), 109-112 (GAGN), 113-116 (GAGN), 117-120 (GAGN), 121-124 (GAGN), 125-128 (GAGN), 129-132 (GAGN), 133-136 (GAGN), 137-140 (GAGN), 141-144 (GAGN), 145-152 (GAVASAGN), 153-156 (GAGN), and 157-164 (GAVASAGN). The segment at 53–164 (GAVASAGNGA…GNGAVASAGN (112 aa)) is 6 X 8 AA repeats of G-A-V-A-S-A-G-N. Positions 85–156 (GAGNGAGNGA…VASAGNGAGN (72 aa)) are 16 X 4 AA repeats of G-A-G-N. The span at 165-206 (GAVAERSSSTPATTTTTTTTNDAEASTSTSSENSNHNNAETN) shows a compositional bias: low complexity. Residues 165–308 (GAVAERSSST…DSQKECTDGN (144 aa)) form a disordered region. Polar residues-rich tracts occupy residues 213–240 (VQPNQANKETQNNSNVQQDSQTKSNVPR) and 247–275 (KSPTAQPEQAENSAPTAEQTESPELQSAP). An N-linked (GlcNAc...) asparagine glycan is attached at Asn224. A glycan (N-linked (GlcNAc...) asparagine) is linked at Asn296. The cysteines at positions 304 and 312 are disulfide-linked. N-linked (GlcNAc...) asparagine glycans are attached at residues Asn320 and Asn321. A lipid anchor (GPI-anchor amidated asparagine) is attached at Asn321. Residues 322 to 347 (SSNIASINKFVVLISATLVLSFAIFI) constitute a propeptide, removed in mature form.

The protein resides in the cell membrane. May play a role in the merozoite attachment to the erythrocyte. The chain is Merozoite surface protein 2 from Plasmodium falciparum (isolate Nig32 / Nigeria).